Consider the following 218-residue polypeptide: Small ribosomal subunit protein mS34 (218 aa).

Residues 180 to 218 (KNGDTSTEEPMLNVQRIRMEPWDYPAKQEDKGRAKGTPV) are disordered. Basic and acidic residues predominate over residues 196–212 (IRMEPWDYPAKQEDKGR).

The protein belongs to the mitochondrion-specific ribosomal protein mS34 family. As to quaternary structure, component of the mitochondrial small ribosomal subunit (mt-SSU). Mature mammalian 55S mitochondrial ribosomes consist of a small (28S) and a large (39S) subunit. The 28S small subunit contains a 12S ribosomal RNA (12S mt-rRNA) and 30 different proteins. The 39S large subunit contains a 16S rRNA (16S mt-rRNA), a copy of mitochondrial valine transfer RNA (mt-tRNA(Val)), which plays an integral structural role, and 52 different proteins.

The protein resides in the mitochondrion. Functionally, required for mitochondrial translation, plays a role in maintaining the stability of the small ribosomal subunit and the 12S rRNA that are required for mitoribosome formation. In Homo sapiens (Human), this protein is Small ribosomal subunit protein mS34 (MRPS34).